The chain runs to 99 residues: Protein Frey (99 aa).

The helical transmembrane segment at 10-29 (YPRAGLSLFLFYLILAGALL) threads the bilayer. The disordered stretch occupies residues 60–90 (DYGLRPKHPRPGGPRPLLSQAQQRKRDGPNM).

In terms of assembly, interacts with SPPL2C (via active sites); the interaction stabilizes FREY1 protein and inhibits SPPL2C proteolytic activity. Interacts with IZUMO1; the interaction retains IZUMO1 at the endoplasmic reticulum membrane and coordinates IZUMO1 complex assembly. As to expression, expressed in round spermatids (at protein level).

Its subcellular location is the endoplasmic reticulum membrane. Its function is as follows. Key regulator for male fertility expressed transiently in round spermatids where it recruits IZUMO1 at the endoplasmic reticulum (ER) membrane and coordinates the oolemmal binding multimeric complex (IZUMO1 complex) assembly. Upon complete assembly of the IZUMO1 complex, its ER retention is released, facilitating IZUMO1 complex export to the acrosome. Through the interaction with SPPL2C, inhibits its intramembrane protease activity directly accessing the catalytic center of an I-CLiP. The chain is Protein Frey from Mus musculus (Mouse).